Reading from the N-terminus, the 194-residue chain is Peptidyl-tRNA hydrolase (194 aa).

Y16 lines the tRNA pocket. H21 functions as the Proton acceptor in the catalytic mechanism. Positions 67, 69, and 115 each coordinate tRNA.

Belongs to the PTH family. Monomer.

Its subcellular location is the cytoplasm. The catalysed reaction is an N-acyl-L-alpha-aminoacyl-tRNA + H2O = an N-acyl-L-amino acid + a tRNA + H(+). Functionally, hydrolyzes ribosome-free peptidyl-tRNAs (with 1 or more amino acids incorporated), which drop off the ribosome during protein synthesis, or as a result of ribosome stalling. Its function is as follows. Catalyzes the release of premature peptidyl moieties from peptidyl-tRNA molecules trapped in stalled 50S ribosomal subunits, and thus maintains levels of free tRNAs and 50S ribosomes. The chain is Peptidyl-tRNA hydrolase from Synechocystis sp. (strain ATCC 27184 / PCC 6803 / Kazusa).